The chain runs to 158 residues: 2-C-methyl-D-erythritol 2,4-cyclodiphosphate synthase (158 aa).

2 residues coordinate a divalent metal cation: D9 and H11. 4-CDP-2-C-methyl-D-erythritol 2-phosphate contacts are provided by residues 9–11 (DVH) and 35–36 (HS). Residue H43 participates in a divalent metal cation binding. Residues 57–59 (DIG), 62–66 (FPDTD), 133–136 (TTTE), F140, and R143 contribute to the 4-CDP-2-C-methyl-D-erythritol 2-phosphate site.

This sequence belongs to the IspF family. As to quaternary structure, homotrimer. It depends on a divalent metal cation as a cofactor.

The catalysed reaction is 4-CDP-2-C-methyl-D-erythritol 2-phosphate = 2-C-methyl-D-erythritol 2,4-cyclic diphosphate + CMP. The protein operates within isoprenoid biosynthesis; isopentenyl diphosphate biosynthesis via DXP pathway; isopentenyl diphosphate from 1-deoxy-D-xylulose 5-phosphate: step 4/6. Its function is as follows. Involved in the biosynthesis of isopentenyl diphosphate (IPP) and dimethylallyl diphosphate (DMAPP), two major building blocks of isoprenoid compounds. Catalyzes the conversion of 4-diphosphocytidyl-2-C-methyl-D-erythritol 2-phosphate (CDP-ME2P) to 2-C-methyl-D-erythritol 2,4-cyclodiphosphate (ME-CPP) with a corresponding release of cytidine 5-monophosphate (CMP). The polypeptide is 2-C-methyl-D-erythritol 2,4-cyclodiphosphate synthase (Geobacillus kaustophilus (strain HTA426)).